The primary structure comprises 179 residues: Large ribosomal subunit protein uL6 (179 aa).

It belongs to the universal ribosomal protein uL6 family. As to quaternary structure, part of the 50S ribosomal subunit.

Its function is as follows. This protein binds to the 23S rRNA, and is important in its secondary structure. It is located near the subunit interface in the base of the L7/L12 stalk, and near the tRNA binding site of the peptidyltransferase center. This chain is Large ribosomal subunit protein uL6, found in Kineococcus radiotolerans (strain ATCC BAA-149 / DSM 14245 / SRS30216).